A 411-amino-acid polypeptide reads, in one-letter code: MKMVLSQRQREELNQAIADYLGSNGYADSLETFRKEADLSTEVEKKFGGLLEKKWTSVIRLQKKVMELEAKLTEAEKEVIEGAPTKNKRTPGEWIPRPPEKFSLTGHRASITRVIFHPIFGLMVSASEDATIRIWDFETGEYERSLKGHTDSVQDVAFDAQGKLLASCSADLSIKLWDFQQSYECIKTMHGHDHNVSSVAFVPAGDYVLSASRDRTIKMWEVATGYCVKTYTGHREWVRMVRVHIEGSIFATCSNDQTIRVWLTNSKDCKVELRDHEHTVECIAWAPEAAASAINEAAGADNKKGHHQGPFLASGSRDKTIRIWDVSVGLCLLTLSGHDNWVRGLAFHPGGKYLVSASDDKTIRVWDLRNKRCMKTLYAHQHFCTSIDFHKAHPYVISGSVDQTVKVWECR.

The LisH domain maps to 9–41 (QREELNQAIADYLGSNGYADSLETFRKEADLST). Residues 56–83 (TSVIRLQKKVMELEAKLTEAEKEVIEGA) are a coiled coil. WD repeat units lie at residues 106 to 147 (GHRA…RSLK), 148 to 187 (GHTD…ECIK), 191 to 230 (GHDH…CVKT), 233 to 272 (GHRE…CKVE), 275 to 334 (DHEH…CLLT), 337 to 376 (GHDN…CMKT), and 379 to 411 (AHQH…WECR).

It belongs to the WD repeat LIS1/nudF family.

The protein resides in the cytoplasm. The protein localises to the cytoskeleton. It localises to the microtubule organizing center. Its subcellular location is the centrosome. Its function is as follows. Positively regulates the activity of the minus-end directed microtubule motor protein dynein. May enhance dynein-mediated microtubule sliding by targeting dynein to the microtubule plus end. Required for several dynein- and microtubule-dependent processes. This chain is Lissencephaly-1 homolog, found in Drosophila yakuba (Fruit fly).